An 821-amino-acid polypeptide reads, in one-letter code: DNA replication licensing factor MCM6 (821 aa).

Methionine 1 carries the post-translational modification N-acetylmethionine. 3 positions are modified to phosphoserine: serine 13, serine 219, and serine 271. Residue threonine 278 is modified to Phosphothreonine. Positions 346–553 constitute an MCM domain; sequence LYHNLCTSLF…TDYAIARRIV (208 aa). ATP-binding residues include histidine 359, serine 399, threonine 400, alanine 401, lysine 402, serine 403, and asparagine 504. Residues 528-531 carry the Arginine finger motif; it reads SRFD. Residues arginine 619 and glutamate 622 each contribute to the ADP site. N6-acetyllysine is present on lysine 643. The tract at residues 676–706 is disordered; it reads VDEGPDGINGHADSPAPASGINGHSEDMNQD. Phosphoserine is present on residues serine 689 and serine 762. At threonine 791 the chain carries Phosphothreonine.

This sequence belongs to the MCM family. In terms of assembly, component of the MCM2-7 complex. The complex forms a toroidal hexameric ring with the proposed subunit order MCM2-MCM6-MCM4-MCM7-MCM3-MCM5. Component of the CMG helicase complex, a hexameric ring of related MCM2-7 subunits stabilized by CDC45 and the tetrameric GINS complex. May interact with MCM10. Interacts with TIPIN. Interacts with CDT1. Interacts with MCMBP. Interacts with DDI2. Post-translationally, O-glycosylated (O-GlcNAcylated), in a cell cycle-dependent manner.

It is found in the nucleus. The protein localises to the chromosome. It catalyses the reaction ATP + H2O = ADP + phosphate + H(+). Acts as a component of the MCM2-7 complex (MCM complex) which is the replicative helicase essential for 'once per cell cycle' DNA replication initiation and elongation in eukaryotic cells. Core component of CDC45-MCM-GINS (CMG) helicase, the molecular machine that unwinds template DNA during replication, and around which the replisome is built. The active ATPase sites in the MCM2-7 ring are formed through the interaction surfaces of two neighboring subunits such that a critical structure of a conserved arginine finger motif is provided in trans relative to the ATP-binding site of the Walker A box of the adjacent subunit. The six ATPase active sites, however, are likely to contribute differentially to the complex helicase activity. The sequence is that of DNA replication licensing factor MCM6 (MCM6) from Bos taurus (Bovine).